The following is a 266-amino-acid chain: 4-hydroxy-tetrahydrodipicolinate reductase (266 aa).

An NAD(+)-binding site is contributed by glycine 10–methionine 15. Lysine 38 contacts NADP(+). NAD(+)-binding positions include glycine 99–threonine 101 and alanine 125–phenylalanine 128. Histidine 155 serves as the catalytic Proton donor/acceptor. Histidine 156 lines the (S)-2,3,4,5-tetrahydrodipicolinate pocket. Lysine 159 functions as the Proton donor in the catalytic mechanism. Glycine 165–threonine 166 contributes to the (S)-2,3,4,5-tetrahydrodipicolinate binding site.

The protein belongs to the DapB family.

The protein localises to the cytoplasm. It catalyses the reaction (S)-2,3,4,5-tetrahydrodipicolinate + NAD(+) + H2O = (2S,4S)-4-hydroxy-2,3,4,5-tetrahydrodipicolinate + NADH + H(+). It carries out the reaction (S)-2,3,4,5-tetrahydrodipicolinate + NADP(+) + H2O = (2S,4S)-4-hydroxy-2,3,4,5-tetrahydrodipicolinate + NADPH + H(+). It functions in the pathway amino-acid biosynthesis; L-lysine biosynthesis via DAP pathway; (S)-tetrahydrodipicolinate from L-aspartate: step 4/4. Functionally, catalyzes the conversion of 4-hydroxy-tetrahydrodipicolinate (HTPA) to tetrahydrodipicolinate. This chain is 4-hydroxy-tetrahydrodipicolinate reductase, found in Bacillus anthracis (strain A0248).